Reading from the N-terminus, the 466-residue chain is Argininosuccinate lyase (466 aa).

The protein belongs to the lyase 1 family. Argininosuccinate lyase subfamily.

It localises to the cytoplasm. The enzyme catalyses 2-(N(omega)-L-arginino)succinate = fumarate + L-arginine. The protein operates within amino-acid biosynthesis; L-arginine biosynthesis; L-arginine from L-ornithine and carbamoyl phosphate: step 3/3. This Bartonella bacilliformis (strain ATCC 35685 / KC583 / Herrer 020/F12,63) protein is Argininosuccinate lyase.